The chain runs to 314 residues: Cytochrome f (314 aa).

A signal peptide spans 1–29; it reads MTRSISISVLIISVLIMIYVITRTSISNA. Heme-binding residues include tyrosine 30, cysteine 50, cysteine 53, and histidine 54. A helical transmembrane segment spans residues 280–300; sequence VQGLLFFLASVILAQIFLVLK.

It belongs to the cytochrome f family. The 4 large subunits of the cytochrome b6-f complex are cytochrome b6, subunit IV (17 kDa polypeptide, petD), cytochrome f and the Rieske protein, while the 4 small subunits are PetG, PetL, PetM and PetN. The complex functions as a dimer. It depends on heme as a cofactor.

It localises to the plastid. It is found in the chloroplast thylakoid membrane. Component of the cytochrome b6-f complex, which mediates electron transfer between photosystem II (PSII) and photosystem I (PSI), cyclic electron flow around PSI, and state transitions. This Illicium oligandrum (Star anise) protein is Cytochrome f.